The primary structure comprises 481 residues: MATPLCQPAASHFIDGTFIEDRTGPEILSVNPVDGEIIAKLHGATSCIIEKAIASAKRAQKEWARKEPAERGRVLSRAADIMRARNRELSVLETRDTGKPISETLVADAASGADCLEYFGAIAATLSGDSIQFGEDWVYTRREPLGVCLGIGAWNYPIQIAAWKAAPALACGNAMIFKPSEVTPLSALKLAEILTEAGLPPGVFNIVQGAGDVGAELATHPAIAKVSLTGSVKTGARVASAAMAGIRPVTMELGGKSALIVFDDADVEAAVSGAILGNFYSAGQICSNGTRVFLQRGIREAFLARLLARVAALKIGDPMDEETDIGPLVSAAHRNRVATYVARAEVEGAYQMAPPRKLPPGDAWHEPVVFTNVTDWMTLAREEVFGPVMAVLDFDDEQDVVARANATDFGLAAGIFTRDLVRAHRLAAELEAGTVWINAYNLTPAGMAFGGIKRSGIGRENGRVAIDHYTQLKSVFVSMQT.

Residues Ser-29 and Asp-96 each coordinate K(+). NAD(+) is bound at residue Gly-152 to Trp-154. Catalysis depends on Lys-164, which acts as the Charge relay system. Residue Lys-178 to Glu-181 participates in NAD(+) binding. Val-182 is a K(+) binding site. NAD(+) is bound at residue Ser-231–Thr-234. Ile-246 provides a ligand contact to K(+). Glu-252 functions as the Proton acceptor in the catalytic mechanism. NAD(+) is bound by residues Gly-254, Cys-286, and Glu-383. Cys-286 serves as the catalytic Nucleophile. Cys-286 is modified (cysteine sulfenic acid (-SOH)). K(+) contacts are provided by Lys-453 and Gly-456. Catalysis depends on Glu-460, which acts as the Charge relay system.

This sequence belongs to the aldehyde dehydrogenase family. As to quaternary structure, dimer of dimers. The cofactor is K(+).

It catalyses the reaction betaine aldehyde + NAD(+) + H2O = glycine betaine + NADH + 2 H(+). It functions in the pathway amine and polyamine biosynthesis; betaine biosynthesis via choline pathway; betaine from betaine aldehyde: step 1/1. Its function is as follows. Involved in the biosynthesis of the osmoprotectant glycine betaine. Catalyzes the irreversible oxidation of betaine aldehyde to the corresponding acid. The polypeptide is Betaine aldehyde dehydrogenase 2 (Rhizobium meliloti (strain 1021) (Ensifer meliloti)).